The following is a 192-amino-acid chain: Ion-translocating oxidoreductase complex subunit B (192 aa).

A hydrophobic region spans residues 1 to 26 (MSTIWIAIAALSALALAFGLVLGYAS). The 4Fe-4S domain maps to 32-91 (ENDPIVEEVEAMLPQSQCGQCGYPGCRPYAEAVALNGENINKCGPGGEAMMLKLAEKLNV). 12 residues coordinate [4Fe-4S] cluster: C49, C52, C57, C74, C117, C120, C123, C127, C147, C150, C153, and C157. 4Fe-4S ferredoxin-type domains lie at 108–137 (QVAW…GSTK) and 138–167 (AVHT…LRPI).

Belongs to the 4Fe4S bacterial-type ferredoxin family. RnfB subfamily. The complex is composed of six subunits: RnfA, RnfB, RnfC, RnfD, RnfE and RnfG. [4Fe-4S] cluster is required as a cofactor.

It localises to the cell inner membrane. Functionally, part of a membrane-bound complex that couples electron transfer with translocation of ions across the membrane. The sequence is that of Ion-translocating oxidoreductase complex subunit B from Pectobacterium carotovorum subsp. carotovorum (strain PC1).